The following is a 441-amino-acid chain: 23S rRNA (uracil(1939)-C(5))-methyltransferase RlmD (441 aa).

The 59-residue stretch at 10-68 folds into the TRAM domain; it reads KPLKQQSLVLDITAMDHHGRGIAKHNNKVCFVSNALPNEQVKATIIADKARYSEAQTHK. Residues Cys81, Cys87, Cys90, and Cys169 each contribute to the [4Fe-4S] cluster site. 6 residues coordinate S-adenosyl-L-methionine: Gln274, Phe303, Asn308, Glu324, Asp351, and Asp372. Cys398 functions as the Nucleophile in the catalytic mechanism.

It belongs to the class I-like SAM-binding methyltransferase superfamily. RNA M5U methyltransferase family. RlmD subfamily.

It catalyses the reaction uridine(1939) in 23S rRNA + S-adenosyl-L-methionine = 5-methyluridine(1939) in 23S rRNA + S-adenosyl-L-homocysteine + H(+). Functionally, catalyzes the formation of 5-methyl-uridine at position 1939 (m5U1939) in 23S rRNA. The chain is 23S rRNA (uracil(1939)-C(5))-methyltransferase RlmD from Pseudoalteromonas translucida (strain TAC 125).